The following is a 237-amino-acid chain: Splicing factor U2AF 35 kDa subunit (237 aa).

Alanine 2 bears the N-acetylalanine mark. The segment at 12-40 adopts a C3H1-type 1 zinc-finger fold; that stretch reads EKDKVNCSFYFKIGACRHGDRCSRLHNKP. The residue at position 39 (lysine 39) is an N6-methyllysine. Phosphoserine occurs at positions 61 and 145. The region spanning 65-147 is the RRM domain; it reads LRCAVSDVEM…QPIHAELSPV (83 aa). Residues 149–176 form a C3H1-type 2 zinc finger; sequence DFREACCRQYEMGECTRGGFCNFMHLKP. Omega-N-methylarginine is present on arginine 165. Residues 185 to 237 form a disordered region; that stretch reads LYGRRRKKHRSRSRSRERRSRSRDRGRGGGGGGGGGRERDRRRSRDRERSGRF. The span at 188–208 shows a compositional bias: basic residues; sequence RRRKKHRSRSRSRERRSRSRD. Positions 220-237 are enriched in basic and acidic residues; it reads GRERDRRRSRDRERSGRF.

This sequence belongs to the splicing factor SR family. In terms of assembly, identified in the spliceosome C complex. Heterodimer with U2AF2. Interacts (via RS domain) with PHF5A (via N-terminus). Interacts with ZRANB2. Interacts with SDE2. Interacts with SF3B1.

The protein resides in the nucleus. It is found in the nucleus speckle. Its function is as follows. Plays a critical role in both constitutive and enhancer-dependent splicing by mediating protein-protein interactions and protein-RNA interactions required for accurate 3'-splice site selection. Recruits U2 snRNP to the branch point. Directly mediates interactions between U2AF2 and proteins bound to the enhancers and thus may function as a bridge between U2AF2 and the enhancer complex to recruit it to the adjacent intron. This is Splicing factor U2AF 35 kDa subunit (U2AF1) from Bos taurus (Bovine).